Reading from the N-terminus, the 153-residue chain is Transcriptional repressor NrdR (153 aa).

A zinc finger spans residues 3 to 34; the sequence is CPYCGYEDSKVIDTRPADEGRTIKRRRECLKC. Residues 49-139 form the ATP-cone domain; it reads ILVIKKDNRR…VYRQFKDINT (91 aa).

This sequence belongs to the NrdR family. Zn(2+) is required as a cofactor.

Negatively regulates transcription of bacterial ribonucleotide reductase nrd genes and operons by binding to NrdR-boxes. The chain is Transcriptional repressor NrdR from Caldicellulosiruptor saccharolyticus (strain ATCC 43494 / DSM 8903 / Tp8T 6331).